Reading from the N-terminus, the 126-residue chain is Small ribosomal subunit protein uS8 (126 aa).

Belongs to the universal ribosomal protein uS8 family. In terms of assembly, part of the 30S ribosomal subunit. Contacts proteins S5 and S12.

One of the primary rRNA binding proteins, it binds directly to 16S rRNA central domain where it helps coordinate assembly of the platform of the 30S subunit. The sequence is that of Small ribosomal subunit protein uS8 from Nitratidesulfovibrio vulgaris (strain DSM 19637 / Miyazaki F) (Desulfovibrio vulgaris).